The following is a 449-amino-acid chain: Methionine aminopeptidase 2 (449 aa).

Residues 1 to 91 form a disordered region; sequence MAAQAAPELA…PRIPLTTLFP (91 aa). Over residues 34–50 the composition is skewed to acidic residues; it reads EEAENEGDSEDDRDDEQ. The span at 61–75 shows a compositional bias: basic residues; sequence KKKKKKRPKKKKKTA. Residue His-199 participates in substrate binding. A divalent metal cation is bound by residues Asp-219, Asp-230, and His-299. His-307 is a substrate binding site. A divalent metal cation contacts are provided by Glu-335 and Glu-430.

The protein belongs to the peptidase M24A family. Methionine aminopeptidase eukaryotic type 2 subfamily. Co(2+) is required as a cofactor. The cofactor is Zn(2+). Requires Mn(2+) as cofactor. It depends on Fe(2+) as a cofactor.

It is found in the cytoplasm. The catalysed reaction is Release of N-terminal amino acids, preferentially methionine, from peptides and arylamides.. Cotranslationally removes the N-terminal methionine from nascent proteins. The N-terminal methionine is often cleaved when the second residue in the primary sequence is small and uncharged (Met-Ala-, Cys, Gly, Pro, Ser, Thr, or Val). In Trichophyton verrucosum (strain HKI 0517), this protein is Methionine aminopeptidase 2.